A 268-amino-acid polypeptide reads, in one-letter code: ELL-associated factor 1 (268 aa).

A disordered region spans residues 106 to 268; that stretch reads IQVKKTRAEG…LSESGSDSDD (163 aa). The span at 128–154 shows a compositional bias: pro residues; the sequence is TRPPQTSQPPPPPPPMPFRAPTKPPVG. Serine 165 is subject to Phosphoserine. Residues 171–181 are compositionally biased toward basic and acidic residues; the sequence is DDIKRELRAEV. Positions 182-262 are necessary for transactivation activity; that stretch reads DIIEQMSSSS…LRNDLQLSES (81 aa). Residues 188 to 213 are compositionally biased toward low complexity; it reads SSSSGSSSSDSESSSGSDDDSSSSGG. The segment covering 238–268 has biased composition (polar residues); the sequence is NGTSRPQGSNQLMNTLRNDLQLSESGSDSDD.

This sequence belongs to the EAF family. In terms of assembly, component of the super elongation complex (SEC), at least composed of EAF1, EAF2, CDK9, MLLT3/AF9, AFF (AFF1 or AFF4), the P-TEFb complex and ELL (ELL, ELL2 or ELL3). Interacts with ELL and ELL2. As to expression, strongly expressed in heart, brain, placenta, lung, liver, skeletal muscle, kidney, pancreas, spleen, prostate, testis, small intestine and colon. Poorly expressed in thymus.

It is found in the nucleus speckle. It localises to the nucleus. The protein localises to the cajal body. Functionally, acts as a transcriptional transactivator of ELL and ELL2 elongation activities. The sequence is that of ELL-associated factor 1 (EAF1) from Homo sapiens (Human).